The sequence spans 141 residues: Nucleoside diphosphate kinase (141 aa).

Positions 11, 59, 87, 93, 104, and 114 each coordinate ATP. Histidine 117 acts as the Pros-phosphohistidine intermediate in catalysis.

Belongs to the NDK family. Homotetramer. Mg(2+) serves as cofactor.

It is found in the cytoplasm. It carries out the reaction a 2'-deoxyribonucleoside 5'-diphosphate + ATP = a 2'-deoxyribonucleoside 5'-triphosphate + ADP. The enzyme catalyses a ribonucleoside 5'-diphosphate + ATP = a ribonucleoside 5'-triphosphate + ADP. Major role in the synthesis of nucleoside triphosphates other than ATP. The ATP gamma phosphate is transferred to the NDP beta phosphate via a ping-pong mechanism, using a phosphorylated active-site intermediate. The sequence is that of Nucleoside diphosphate kinase from Leptothrix cholodnii (strain ATCC 51168 / LMG 8142 / SP-6) (Leptothrix discophora (strain SP-6)).